The sequence spans 957 residues: Valine--tRNA ligase (957 aa).

Positions proline 42 to histidine 52 match the 'HIGH' region motif. The short motif at lysine 554–serine 558 is the 'KMSKS' region element. ATP is bound at residue lysine 557. The stretch at aspartate 890–alanine 956 forms a coiled coil.

This sequence belongs to the class-I aminoacyl-tRNA synthetase family. ValS type 1 subfamily. As to quaternary structure, monomer.

The protein resides in the cytoplasm. It carries out the reaction tRNA(Val) + L-valine + ATP = L-valyl-tRNA(Val) + AMP + diphosphate. Catalyzes the attachment of valine to tRNA(Val). As ValRS can inadvertently accommodate and process structurally similar amino acids such as threonine, to avoid such errors, it has a 'posttransfer' editing activity that hydrolyzes mischarged Thr-tRNA(Val) in a tRNA-dependent manner. The protein is Valine--tRNA ligase of Aliivibrio fischeri (strain ATCC 700601 / ES114) (Vibrio fischeri).